The chain runs to 52 residues: Alpha-1-antiproteinase 3 (52 aa).

The interval 1 to 20 (EDLQGDAVPEEXATKDDNEH) is disordered.

The protein belongs to the serpin family. Post-translationally, N-glycosylated; contains glycans with bi- and triantennary side chains. In terms of tissue distribution, plasma.

It is found in the secreted. This is Alpha-1-antiproteinase 3 from Equus caballus (Horse).